Reading from the N-terminus, the 799-residue chain is Putative aconitate hydratase, mitochondrial (799 aa).

Residues 1 to 32 (MVRQLVWQRATASRRLAPKCLSPQQLFARRGL) constitute a mitochondrion transit peptide. Substrate-binding positions include Gln108 and 201-203 (DSH). The [4Fe-4S] cluster site is built by Cys399, Cys462, and Cys465. Substrate contacts are provided by Arg489 and Arg494. Positions 538–564 (KFRPPQGSDLPSAGFADGNPALQPSAG) are disordered. Substrate is bound at residue 685–686 (AR).

This sequence belongs to the aconitase/IPM isomerase family.

It is found in the mitochondrion. Its function is as follows. Has no detectable activity towards cis-acontiate or cis-homoaconitate. This is Putative aconitate hydratase, mitochondrial (acoB) from Aspergillus fumigatus (strain ATCC MYA-4609 / CBS 101355 / FGSC A1100 / Af293) (Neosartorya fumigata).